The chain runs to 495 residues: MTVMSGENVDEASAAPGHPQDGSYPRQADHDDHECCERVVINISGLRFETQLKTLAQFPNTLLGNPKKRMRYFDPLRNEYFFDRNRPSFDAILYYYQSGGRLRRPVNVPLDMFSEEIKFYELGEEAMEKFREDEGFIKEEERPLPEKEYQRQVWLLFEYPESSGPARVIAIVSVMVILISIVIFCLETLPELKDDKDFTGTVHRIDNTTVIYNSNIFTDPFFIVETLCIIWFSFELVVRFFACPSKTDFFKNIMNFIDIVAIIPYFITLGTEIAEQEGNQKGEQATSLAILRVIRLVRVFRIFKLSRHSKGLQILGQTLKASMRELGLLIFFLFIGVILFSSAVYFAEAEEAESHFSSIPDAFWWAVVSMTTVGYGDMYPVTIGGKIVGSLCAIAGVLTIALPVPVIVSNFNYFYHRETEGEEQAQLLHVSSPNLASDSDLSRRSSSTMSKSEYMEIEEDMNNSIAHYRQVNIRTANCTTANQNCVNKSKLLTDV.

The segment at M1–H30 is disordered. Residues M1–E128 form a tetramerization domain region. The Cytoplasmic segment spans residues M1–G164. A Phosphoserine modification is found at S23. A helical transmembrane segment spans residues P165–L186. The Extracellular portion of the chain corresponds to E187–P220. N-linked (GlcNAc...) asparagine glycosylation occurs at N207. Residues F221–A242 form a helical membrane-spanning segment. The S-palmitoyl cysteine moiety is linked to residue C243. Topologically, residues C243–I253 are cytoplasmic. Residues M254–A274 traverse the membrane as a helical segment. At E275–S287 the chain is on the extracellular side. The helical; Voltage-sensor transmembrane segment at L288–H308 threads the bilayer. Residues S309–M323 lie on the Cytoplasmic side of the membrane. The S4-S5 linker stretch occupies residues K310–M323. The residue at position 322 (S322) is a Phosphoserine; by PKA. The chain crosses the membrane as a helical span at residues R324–Y345. At F346 to I359 the chain is on the extracellular side. Positions P360–T371 form an intramembrane region, helical. Positions T372–D377 match the Selectivity filter motif. An intramembrane segment occupies T372–Y379. Topologically, residues P380–K386 are extracellular. Residues I387–Y415 form a helical membrane-spanning segment. The Cytoplasmic portion of the chain corresponds to H416–V495. A phosphoserine mark is found at S437 and S439. Residue S446 is modified to Phosphoserine; by PKA. A PDZ-binding motif is present at residues T493 to V495.

Belongs to the potassium channel family. A (Shaker) (TC 1.A.1.2) subfamily. Kv1.1/KCNA1 sub-subfamily. Homotetramer and heterotetramer with other channel-forming alpha subunits, such as KCNA2, KCNA4, KCNA5, KCNA6 and KCNA7. Channel activity is regulated by interaction with the beta subunits KCNAB1 and KCNAB2. Identified in a complex with KCNA2 and KCNAB2. Interacts (via C-terminus) with the PDZ domains of DLG1, DLG2 and DLG4. Interacts with LGI1 within a complex containing LGI1, KCNA4 and KCNAB1. Interacts (via N-terminus) with STX1A; this promotes channel inactivation. Interacts (via N-terminus) with the heterodimer formed by GNB1 and GNG2; this promotes channel inactivation. Can interact simultaneously with STX1A and the heterodimer formed by GNB1 and GNG2. Interacts (via cytoplasmic N-terminal domain) with KCNRG; this inhibits channel activity. Interacts with ANK3; this inhibits channel activity. Interacts with ADAM11. In terms of processing, N-glycosylated. Post-translationally, palmitoylated on Cys-243; which may be required for membrane targeting. Phosphorylated on tyrosine residues. Phosphorylation increases in response to NRG1; this inhibits channel activity. Phosphorylation at Ser-446 regulates channel activity by down-regulating expression at the cell membrane. As to expression, detected adjacent to nodes of Ranvier in juxtaparanodal zones in spinal cord nerve fibers, but also in paranodal regions in some myelinated spinal cord axons (at protein level). Detected in the islet of Langerhans.

The protein resides in the cell membrane. It localises to the membrane. It is found in the cell projection. Its subcellular location is the axon. The protein localises to the cytoplasmic vesicle. The protein resides in the perikaryon. It localises to the endoplasmic reticulum. It is found in the dendrite. Its subcellular location is the cell junction. The protein localises to the synapse. The protein resides in the presynaptic cell membrane. It localises to the presynapse. The catalysed reaction is K(+)(in) = K(+)(out). Its activity is regulated as follows. Inhibited by 1.1 mM 4-aminopyridine (4-AP) and by 20 mM tetraethylammonium (TEA), but not by charybdotoxin (CTX). Inhibited by dendrotoxin (DTX). Its function is as follows. Voltage-gated potassium channel that mediates transmembrane potassium transport in excitable membranes, primarily in the brain and the central nervous system, but also in the kidney. Contributes to the regulation of the membrane potential and nerve signaling, and prevents neuronal hyperexcitability. Forms tetrameric potassium-selective channels through which potassium ions pass in accordance with their electrochemical gradient. The channel alternates between opened and closed conformations in response to the voltage difference across the membrane. Can form functional homotetrameric channels and heterotetrameric channels that contain variable proportions of KCNA1, KCNA2, KCNA4, KCNA5, KCNA6, KCNA7, and possibly other family members as well; channel properties depend on the type of alpha subunits that are part of the channel. Channel properties are modulated by cytoplasmic beta subunits that regulate the subcellular location of the alpha subunits and promote rapid inactivation of delayed rectifier potassium channels. In vivo, membranes probably contain a mixture of heteromeric potassium channel complexes, making it difficult to assign currents observed in intact tissues to any particular potassium channel family member. Homotetrameric KCNA1 forms a delayed-rectifier potassium channel that opens in response to membrane depolarization, followed by slow spontaneous channel closure. In contrast, a heterotetrameric channel formed by KCNA1 and KCNA4 shows rapid inactivation. Regulates neuronal excitability in hippocampus, especially in mossy fibers and medial perforant path axons, preventing neuronal hyperexcitability. Response to toxins that are selective for KCNA1, respectively for KCNA2, suggests that heteromeric potassium channels composed of both KCNA1 and KCNA2 play a role in pacemaking and regulate the output of deep cerebellar nuclear neurons. May function as down-stream effector for G protein-coupled receptors and inhibit GABAergic inputs to basolateral amygdala neurons. May contribute to the regulation of neurotransmitter release, such as gamma-aminobutyric acid (GABA) release. Plays a role in regulating the generation of action potentials and preventing hyperexcitability in myelinated axons of the vagus nerve, and thereby contributes to the regulation of heart contraction. Required for normal neuromuscular responses. Regulates the frequency of neuronal action potential firing in response to mechanical stimuli, and plays a role in the perception of pain caused by mechanical stimuli, but does not play a role in the perception of pain due to heat stimuli. Required for normal responses to auditory stimuli and precise location of sound sources, but not for sound perception. The use of toxins that block specific channels suggest that it contributes to the regulation of the axonal release of the neurotransmitter dopamine. Required for normal postnatal brain development and normal proliferation of neuronal precursor cells in the brain. Plays a role in the reabsorption of Mg(2+) in the distal convoluted tubules in the kidney and in magnesium ion homeostasis, probably via its effect on the membrane potential. In Homo sapiens (Human), this protein is Potassium voltage-gated channel subfamily A member 1.